Reading from the N-terminus, the 442-residue chain is Proline--tRNA ligase (442 aa).

This sequence belongs to the class-II aminoacyl-tRNA synthetase family. ProS type 2 subfamily. Homodimer.

Its subcellular location is the cytoplasm. It carries out the reaction tRNA(Pro) + L-proline + ATP = L-prolyl-tRNA(Pro) + AMP + diphosphate. In terms of biological role, catalyzes the attachment of proline to tRNA(Pro) in a two-step reaction: proline is first activated by ATP to form Pro-AMP and then transferred to the acceptor end of tRNA(Pro). In Brucella melitensis biotype 2 (strain ATCC 23457), this protein is Proline--tRNA ligase.